Reading from the N-terminus, the 78-residue chain is uncharacterized protein (78 aa).

The interval 1-28 (MQANHSVSYLYESSTSKRSNGLFSQTQK) is disordered.

This is an uncharacterized protein from Saccharomyces cerevisiae (strain ATCC 204508 / S288c) (Baker's yeast).